A 215-amino-acid chain; its full sequence is Ras-related protein Rab-5B (215 aa).

At T2 the chain carries N-acetylthreonine. S29, A30, G32, K33, S34, S35, H46, E47, T52, and G78 together coordinate GTP. A Mg(2+)-binding site is contributed by S34. 2 consecutive short sequence motifs (switch) follow at residues 44–56 (QFHE…IGAA) and 77–93 (AGQE…YRGA). T52 contributes to the Mg(2+) binding site. A Phosphoserine; by LRRK2 modification is found at S84. 5 residues coordinate GTP: N133, K134, D136, A164, and K165. Residues 186–215 (PQNLGGAAGRSRGVDLHEQSQQNKSQCCSN) are disordered. The span at 204-215 (QSQQNKSQCCSN) shows a compositional bias: low complexity. S-geranylgeranyl cysteine attachment occurs at residues C212 and C213.

This sequence belongs to the small GTPase superfamily. Rab family. In terms of assembly, binds EEA1. Interacts with RIN2 and RIN3, which probably regulate its pathway, possibly by acting as GEFs. Interacts with GDI1, GDI2, CHML and CHM; phosphorylation at Ser-84 disrupts this interaction. It depends on Mg(2+) as a cofactor. Post-translationally, phosphorylation of Ser-84 in the switch II region by LRRK2 prevents the association of RAB regulatory proteins, including CHM, CHML and RAB GDP dissociation inhibitors GDI1 and GDI2. In terms of processing, (Microbial infection) Glycosylated on arginine residues by S.typhimurium protein Ssek3.

The protein resides in the cell membrane. It is found in the early endosome membrane. Its subcellular location is the melanosome. The catalysed reaction is GTP + H2O = GDP + phosphate + H(+). With respect to regulation, regulated by guanine nucleotide exchange factors (GEFs) which promote the exchange of bound GDP for free GTP. Regulated by GTPase activating proteins (GAPs) which increase the GTP hydrolysis activity. Inhibited by GDP dissociation inhibitors (GDIs). Functionally, the small GTPases Rab are key regulators of intracellular membrane trafficking, from the formation of transport vesicles to their fusion with membranes. Rabs cycle between an inactive GDP-bound form and an active GTP-bound form that is able to recruit to membranes different sets of downstream effectors directly responsible for vesicle formation, movement, tethering and fusion. This is Ras-related protein Rab-5B from Homo sapiens (Human).